A 134-amino-acid chain; its full sequence is Small ribosomal subunit protein bS6 (134 aa).

A disordered region spans residues 103-134; sequence AAPVKSAEEGTEEVAAEAATEAPAETTTTVEG. Positions 118 to 134 are enriched in low complexity; it reads AEAATEAPAETTTTVEG.

The protein belongs to the bacterial ribosomal protein bS6 family.

Binds together with bS18 to 16S ribosomal RNA. The protein is Small ribosomal subunit protein bS6 of Citrifermentans bemidjiense (strain ATCC BAA-1014 / DSM 16622 / JCM 12645 / Bem) (Geobacter bemidjiensis).